A 257-amino-acid polypeptide reads, in one-letter code: Thiazole synthase (257 aa).

K96 (schiff-base intermediate with DXP) is an active-site residue. 1-deoxy-D-xylulose 5-phosphate-binding positions include G157, 184–185, and 206–207; these read AG and NT.

It belongs to the ThiG family. As to quaternary structure, homotetramer. Forms heterodimers with either ThiH or ThiS.

Its subcellular location is the cytoplasm. It carries out the reaction [ThiS sulfur-carrier protein]-C-terminal-Gly-aminoethanethioate + 2-iminoacetate + 1-deoxy-D-xylulose 5-phosphate = [ThiS sulfur-carrier protein]-C-terminal Gly-Gly + 2-[(2R,5Z)-2-carboxy-4-methylthiazol-5(2H)-ylidene]ethyl phosphate + 2 H2O + H(+). Its pathway is cofactor biosynthesis; thiamine diphosphate biosynthesis. In terms of biological role, catalyzes the rearrangement of 1-deoxy-D-xylulose 5-phosphate (DXP) to produce the thiazole phosphate moiety of thiamine. Sulfur is provided by the thiocarboxylate moiety of the carrier protein ThiS. In vitro, sulfur can be provided by H(2)S. This chain is Thiazole synthase, found in Bartonella quintana (strain Toulouse) (Rochalimaea quintana).